A 332-amino-acid polypeptide reads, in one-letter code: Glycerol-3-phosphate dehydrogenase [NAD(P)+] (332 aa).

The NADPH site is built by Trp-11, Arg-30, and Lys-108. Residues Lys-108, Gly-137, and Ser-139 each contribute to the sn-glycerol 3-phosphate site. Ala-141 is an NADPH binding site. Residues Lys-192, Asp-245, Ser-255, Arg-256, and Asn-257 each contribute to the sn-glycerol 3-phosphate site. The active-site Proton acceptor is Lys-192. Arg-256 serves as a coordination point for NADPH. NADPH contacts are provided by Val-280 and Glu-282.

This sequence belongs to the NAD-dependent glycerol-3-phosphate dehydrogenase family.

It localises to the cytoplasm. It catalyses the reaction sn-glycerol 3-phosphate + NAD(+) = dihydroxyacetone phosphate + NADH + H(+). The enzyme catalyses sn-glycerol 3-phosphate + NADP(+) = dihydroxyacetone phosphate + NADPH + H(+). The protein operates within membrane lipid metabolism; glycerophospholipid metabolism. In terms of biological role, catalyzes the reduction of the glycolytic intermediate dihydroxyacetone phosphate (DHAP) to sn-glycerol 3-phosphate (G3P), the key precursor for phospholipid synthesis. This Paraburkholderia phymatum (strain DSM 17167 / CIP 108236 / LMG 21445 / STM815) (Burkholderia phymatum) protein is Glycerol-3-phosphate dehydrogenase [NAD(P)+].